A 162-amino-acid polypeptide reads, in one-letter code: MKVVLQRVSEASVDVVNELGTLDPTFEPQQIGPGFMILVGVTDEDGDKQIAWLAHKILNLRVFEDAQGKMNRSIQDIGGEILSISQFTLFADVHKGNRPSFIKAGKPEHADLMWIKFNEALRSGGVPVKEGRFGAHMRVGLVNDGPVTIVIDTEHDMPDGTR.

The Gly-cisPro motif, important for rejection of L-amino acids signature appears at 145–146; it reads GP.

The protein belongs to the DTD family. Homodimer.

Its subcellular location is the cytoplasm. The catalysed reaction is glycyl-tRNA(Ala) + H2O = tRNA(Ala) + glycine + H(+). It catalyses the reaction a D-aminoacyl-tRNA + H2O = a tRNA + a D-alpha-amino acid + H(+). In terms of biological role, an aminoacyl-tRNA editing enzyme that deacylates mischarged D-aminoacyl-tRNAs. Also deacylates mischarged glycyl-tRNA(Ala), protecting cells against glycine mischarging by AlaRS. Acts via tRNA-based rather than protein-based catalysis; rejects L-amino acids rather than detecting D-amino acids in the active site. By recycling D-aminoacyl-tRNA to D-amino acids and free tRNA molecules, this enzyme counteracts the toxicity associated with the formation of D-aminoacyl-tRNA entities in vivo and helps enforce protein L-homochirality. In Bifidobacterium longum subsp. infantis (strain ATCC 15697 / DSM 20088 / JCM 1222 / NCTC 11817 / S12), this protein is D-aminoacyl-tRNA deacylase.